The sequence spans 66 residues: Small ribosomal subunit protein bS21A (66 aa).

Residues 34 to 46 (KHYEKPSVKKKRK) are compositionally biased toward basic residues. Residues 34–66 (KHYEKPSVKKKRKQMEAERKRRKAQRFRKPDRD) form a disordered region.

Belongs to the bacterial ribosomal protein bS21 family.

The polypeptide is Small ribosomal subunit protein bS21A (Geobacter sulfurreducens (strain ATCC 51573 / DSM 12127 / PCA)).